The following is a 443-amino-acid chain: Tol-Pal system protein TolB (443 aa).

The first 33 residues, 1-33 (MKIGIINTKIRTVFSAFACMIAASLVCTMPARA), serve as a signal peptide directing secretion.

The protein belongs to the TolB family. As to quaternary structure, the Tol-Pal system is composed of five core proteins: the inner membrane proteins TolA, TolQ and TolR, the periplasmic protein TolB and the outer membrane protein Pal. They form a network linking the inner and outer membranes and the peptidoglycan layer.

It localises to the periplasm. Functionally, part of the Tol-Pal system, which plays a role in outer membrane invagination during cell division and is important for maintaining outer membrane integrity. This is Tol-Pal system protein TolB from Brucella suis biovar 1 (strain 1330).